Here is a 484-residue protein sequence, read N- to C-terminus: Glycogen synthase (484 aa).

Lys-18 is an ADP-alpha-D-glucose binding site.

It belongs to the glycosyltransferase 1 family. Bacterial/plant glycogen synthase subfamily.

It catalyses the reaction [(1-&gt;4)-alpha-D-glucosyl](n) + ADP-alpha-D-glucose = [(1-&gt;4)-alpha-D-glucosyl](n+1) + ADP + H(+). The protein operates within glycan biosynthesis; glycogen biosynthesis. In terms of biological role, synthesizes alpha-1,4-glucan chains using ADP-glucose. This Vibrio cholerae serotype O1 (strain ATCC 39541 / Classical Ogawa 395 / O395) protein is Glycogen synthase.